The primary structure comprises 345 residues: Metal-dependent phosphohydrolase cns2 (345 aa).

Residues 70-171 (RLEHSVGAFI…QLCADRLDYA (102 aa)) form the HD domain.

As to quaternary structure, interacts with cns1.

The protein localises to the lipid droplet. It participates in secondary metabolite biosynthesis. Metal-dependent phosphohydrolase; part of the gene cluster that mediates the biosynthesis of cordycepin (COR) and pentostatin (PTN), two adenosine analogs with related bioactivity profiles as both mimic adenosine and can inhibit some of the processes that are adenosine dependent. Within the pathway, cns2 catalyzes dephosphorylation of 3'-AMP to produce 2'-carbonyl-3'-deoxyadenosine (2'-C-3'-dA). The first step of cordycepin biosynthesis involves hydroxyl phosphorylation of the 3'-OH position on adenosine to produce adenosine-3'-monophosphate (3'-AMP), catalyzed by kinase activity of cns3. Next, 3'-AMP is dephosphorylated to 2'-carbonyl-3'-deoxyadenosine by cns2, which is finally converted to cordycepin (3'-deoxyadenosine) by the oxidoreductase cns1. In Cordyceps militaris (strain CM01) (Caterpillar fungus), this protein is Metal-dependent phosphohydrolase cns2.